The chain runs to 539 residues: Glycerophosphoinositol inositolphosphodiesterase GDPD2 (539 aa).

Residues 1-38 (MAESPGCCSVWARCLHCLYSCHWRKCPRERMQTSKCDC) lie on the Cytoplasmic side of the membrane. The helical transmembrane segment at 39-59 (IWFGLLFLTFLLSLSWLYIGL) threads the bilayer. Topologically, residues 60-85 (VLLNDLHNFNEFLFRRWGHWMDWSLA) are extracellular. Residues 86–106 (FLLVISLLVTYASLLLVLALL) traverse the membrane as a helical segment. The Cytoplasmic portion of the chain corresponds to 107–121 (LRLCRQPLHLHSLHK). Residues 122-142 (VLLLLIMLLVAAGLVGLDIQW) form a helical membrane-spanning segment. Residues 143–154 (QQEWHSLRVSLQ) lie on the Extracellular side of the membrane. Residues 155 to 175 (ATAPFLHIGAAAGIALLAWPV) form a helical membrane-spanning segment. Over 176 to 188 (ADTFYRIHRRGPK) the chain is Cytoplasmic. A helical membrane pass occupies residues 189 to 209 (ILLLLLFFGVVLVIYLAPLCI). Residues 210 to 490 (SSPCIMEPRD…PIWLITPQTY (281 aa)) lie on the Extracellular side of the membrane. Residues 224 to 479 (PGLVGHRGAP…NDCQLLQQMR (256 aa)) enclose the GP-PDE domain. A divalent metal cation is bound by residues E256, D258, and H271. N442 is a glycosylation site (N-linked (GlcNAc...) asparagine). A helical transmembrane segment spans residues 491–511 (LIIWVITNCVSTMLLLWTFLL). Over 512–539 (QRRFVKKRGKTGLETAVLLTRINNFMME) the chain is Cytoplasmic.

This sequence belongs to the glycerophosphoryl diester phosphodiesterase family. Ca(2+) serves as cofactor.

The protein resides in the cell membrane. It localises to the cytoplasm. The protein localises to the cytoskeleton. The catalysed reaction is sn-glycero-3-phospho-1D-myo-inositol + H2O = 1D-myo-inositol 1-phosphate + glycerol + H(+). Its function is as follows. Has glycerophosphoinositol inositolphosphodiesterase activity and specifically hydrolyzes glycerophosphoinositol, with no activity for other substrates such as glycerophosphoinositol 4-phosphate, glycerophosphocholine, glycerophosphoethanolamine, and glycerophosphoserine. Accelerates the program of osteoblast differentiation and growth. May play a role in remodeling of the actin cytoskeleton. In Homo sapiens (Human), this protein is Glycerophosphoinositol inositolphosphodiesterase GDPD2 (GDPD2).